A 491-amino-acid chain; its full sequence is Protein nucleotidyltransferase YdiU (491 aa).

Positions 94, 96, 97, 117, 129, 130, 180, and 187 each coordinate ATP. The Proton acceptor role is filled by Asp-256. The Mg(2+) site is built by Asn-257 and Asp-266. Asp-266 contributes to the ATP binding site.

This sequence belongs to the SELO family. Requires Mg(2+) as cofactor. The cofactor is Mn(2+).

The enzyme catalyses L-seryl-[protein] + ATP = 3-O-(5'-adenylyl)-L-seryl-[protein] + diphosphate. The catalysed reaction is L-threonyl-[protein] + ATP = 3-O-(5'-adenylyl)-L-threonyl-[protein] + diphosphate. It carries out the reaction L-tyrosyl-[protein] + ATP = O-(5'-adenylyl)-L-tyrosyl-[protein] + diphosphate. It catalyses the reaction L-histidyl-[protein] + UTP = N(tele)-(5'-uridylyl)-L-histidyl-[protein] + diphosphate. The enzyme catalyses L-seryl-[protein] + UTP = O-(5'-uridylyl)-L-seryl-[protein] + diphosphate. The catalysed reaction is L-tyrosyl-[protein] + UTP = O-(5'-uridylyl)-L-tyrosyl-[protein] + diphosphate. In terms of biological role, nucleotidyltransferase involved in the post-translational modification of proteins. It can catalyze the addition of adenosine monophosphate (AMP) or uridine monophosphate (UMP) to a protein, resulting in modifications known as AMPylation and UMPylation. The sequence is that of Protein nucleotidyltransferase YdiU from Clostridium botulinum (strain Okra / Type B1).